The primary structure comprises 329 residues: Peroxidase 73 (329 aa).

The first 25 residues, methionine 1–alanine 25, serve as a signal peptide directing secretion. Disulfide bonds link cysteine 36–cysteine 119, cysteine 69–cysteine 74, cysteine 125–cysteine 325, and cysteine 204–cysteine 236. Histidine 67 functions as the Proton acceptor in the catalytic mechanism. Ca(2+)-binding residues include aspartate 68, valine 71, glycine 73, aspartate 75, and serine 77. Proline 167 provides a ligand contact to substrate. Histidine 197 contacts heme b. A Ca(2+)-binding site is contributed by threonine 198. An N-linked (GlcNAc...) asparagine glycan is attached at asparagine 215. 3 residues coordinate Ca(2+): aspartate 249, threonine 252, and aspartate 257.

It belongs to the peroxidase family. Classical plant (class III) peroxidase subfamily. Heme b is required as a cofactor. Ca(2+) serves as cofactor. As to expression, expressed in the whole plant, with the highest expression in roots.

The protein resides in the secreted. It carries out the reaction 2 a phenolic donor + H2O2 = 2 a phenolic radical donor + 2 H2O. Its function is as follows. Removal of H(2)O(2), oxidation of toxic reductants, biosynthesis and degradation of lignin, suberization, auxin catabolism, response to environmental stresses such as wounding, pathogen attack and oxidative stress. These functions might be dependent on each isozyme/isoform in each plant tissue. This Arabidopsis thaliana (Mouse-ear cress) protein is Peroxidase 73 (PER73).